The sequence spans 589 residues: Serine/threonine-protein kinase STE7 homolog (589 aa).

The segment covering 1-18 has biased composition (basic and acidic residues); that stretch reads MTRTTRIDTQEATKHKDL. 2 disordered regions span residues 1-162 and 185-232; these read MTRT…DPDN and RQHY…PASS. Low complexity predominate over residues 24–33; it reads PLSLSSNPNP. Over residues 57–69 the composition is skewed to polar residues; sequence VKSTSGSLRSSDM. Low complexity predominate over residues 92-121; that stretch reads PTASSSATSTPTSNITGSSSASSIQFAQKS. 2 stretches are compositionally biased toward polar residues: residues 127–136 and 144–162; these read IVSQTLSRPS and SGYSSLNVNQSNRNVDPDN. The span at 185 to 203 shows a compositional bias: basic residues; that stretch reads RQHYQNSHHHLPTTNRKRQ. Positions 206-220 are enriched in low complexity; the sequence is ISSISPTKSSAASSP. Positions 249 to 565 constitute a Protein kinase domain; sequence LLTLKQLGSG…QLLEDKEHFF (317 aa). ATP-binding positions include 255 to 263 and Lys278; that span reads LGSGNSGSV. The active-site Proton acceptor is Asp374. Ser402 carries the phosphoserine modification. At Thr408 the chain carries Phosphothreonine. The tract at residues 473-499 is disordered; sequence IAAERNGQNSPSRSRKNKQKGNGYNSY.

This sequence belongs to the protein kinase superfamily. STE Ser/Thr protein kinase family. MAP kinase kinase subfamily.

The enzyme catalyses L-seryl-[protein] + ATP = O-phospho-L-seryl-[protein] + ADP + H(+). It catalyses the reaction L-threonyl-[protein] + ATP = O-phospho-L-threonyl-[protein] + ADP + H(+). The catalysed reaction is L-tyrosyl-[protein] + ATP = O-phospho-L-tyrosyl-[protein] + ADP + H(+). The chain is Serine/threonine-protein kinase STE7 homolog (HST7) from Candida albicans (strain WO-1) (Yeast).